A 74-amino-acid chain; its full sequence is Ribosome modulation factor (74 aa).

This sequence belongs to the ribosome modulation factor family.

It localises to the cytoplasm. Functionally, during stationary phase, converts 70S ribosomes to an inactive dimeric form (100S ribosomes). This chain is Ribosome modulation factor, found in Cellvibrio japonicus (strain Ueda107) (Pseudomonas fluorescens subsp. cellulosa).